The following is a 147-amino-acid chain: Large ribosomal subunit protein uL13 (147 aa).

This sequence belongs to the universal ribosomal protein uL13 family. In terms of assembly, part of the 50S ribosomal subunit.

This protein is one of the early assembly proteins of the 50S ribosomal subunit, although it is not seen to bind rRNA by itself. It is important during the early stages of 50S assembly. In Deinococcus geothermalis (strain DSM 11300 / CIP 105573 / AG-3a), this protein is Large ribosomal subunit protein uL13.